A 261-amino-acid polypeptide reads, in one-letter code: Tryptophan synthase alpha chain (261 aa).

Residues glutamate 47 and aspartate 58 each act as proton acceptor in the active site.

This sequence belongs to the TrpA family. As to quaternary structure, tetramer of two alpha and two beta chains.

It catalyses the reaction (1S,2R)-1-C-(indol-3-yl)glycerol 3-phosphate + L-serine = D-glyceraldehyde 3-phosphate + L-tryptophan + H2O. The protein operates within amino-acid biosynthesis; L-tryptophan biosynthesis; L-tryptophan from chorismate: step 5/5. The alpha subunit is responsible for the aldol cleavage of indoleglycerol phosphate to indole and glyceraldehyde 3-phosphate. This is Tryptophan synthase alpha chain from Neisseria gonorrhoeae (strain ATCC 700825 / FA 1090).